A 434-amino-acid polypeptide reads, in one-letter code: UDP-glucose 6-dehydrogenase (434 aa).

NAD(+) is bound by residues 2 to 19 (NITFIGSGYVGLVSGIIM), Val11, Asp30, Lys35, Thr121, and Glu152. Residues 148 to 152 (EFLRE), Lys204, Asn208, 249 to 253 (FLNAG), and Gly257 contribute to the substrate site. The active-site Nucleophile is Cys260. Position 263 (Lys263) interacts with NAD(+). Residue Lys321 participates in substrate binding. Arg328 lines the NAD(+) pocket.

It belongs to the UDP-glucose/GDP-mannose dehydrogenase family.

It catalyses the reaction UDP-alpha-D-glucose + 2 NAD(+) + H2O = UDP-alpha-D-glucuronate + 2 NADH + 3 H(+). The protein operates within nucleotide-sugar biosynthesis; UDP-alpha-D-glucuronate biosynthesis; UDP-alpha-D-glucuronate from UDP-alpha-D-glucose: step 1/1. The polypeptide is UDP-glucose 6-dehydrogenase (udg) (Rickettsia prowazekii (strain Madrid E)).